A 309-amino-acid polypeptide reads, in one-letter code: Aromatic prenyltransferase (309 aa).

Belongs to the aromatic prenyltransferase family.

Its function is as follows. Prenyltransferase that attaches isoprenoid moieties to carbon atoms of aromatic substrates in an enzyme-catalyzed Friedel-Crafts reaction. Shows specificity for dimethylallyl diphosphate (DMAPP) and does not accept geranyl diphosphate (GPP) or isopentenyl diphosphate (IPP). Prenylates the artificial substrate 2,7-dihydroxynaphthalene (2,7-DHN), as well as dihydrophenazine-1-carboxylic acid and 4-hydroxybenzoic acid at lower levels. Only traces of products are detected with aspulvinone E or flaviolin as substrates; and no product is formed with L-tryptophan, L-tyrosine, or 4-hydroxyphenylpyruvate. Ptf seems no to be involved in the prenylation reaction in the biosynthesis of aspulvinone H and J and the physiological function of ptf remains unknown. This Sclerotinia sclerotiorum (strain ATCC 18683 / 1980 / Ss-1) (White mold) protein is Aromatic prenyltransferase.